Consider the following 664-residue polypeptide: Chaperone protein DnaK (664 aa).

A Phosphothreonine; by autocatalysis modification is found at T201. Disordered stretches follow at residues 516–538 and 578–664; these read DAEK…NEAD and APVE…KPND. The span at 578 to 592 shows a compositional bias: basic and acidic residues; that stretch reads APVEKIKDASEELSR. Composition is skewed to low complexity over residues 600–617 and 638–649; these read AMQS…ANAQ and AGNSASSNSNNE.

It belongs to the heat shock protein 70 family.

In terms of biological role, acts as a chaperone. The sequence is that of Chaperone protein DnaK from Chlamydia caviae (strain ATCC VR-813 / DSM 19441 / 03DC25 / GPIC) (Chlamydophila caviae).